The sequence spans 192 residues: Putative B3 domain-containing protein At4g03160 (192 aa).

A disordered region spans residues 22–44 (VFFDQEEEEEDEEEEYDEESVCE). Over residues 25–44 (DQEEEEEDEEEEYDEESVCE) the composition is skewed to acidic residues. A DNA-binding region (TF-B3) is located at residues 75–173 (KDNQYRLMLG…EICFAIDSTR (99 aa)).

It is found in the nucleus. This chain is Putative B3 domain-containing protein At4g03160, found in Arabidopsis thaliana (Mouse-ear cress).